The chain runs to 204 residues: Cytochrome c oxidase subunit 3 (204 aa).

A run of 5 helical transmembrane segments spans residues 12–32 (YGNLLLMLGFLLMIMTMIQWW), 56–76 (GMMLFIVSEICFFFAFFWAYF), 101–121 (FQIPLLNTAILLSSGVSVTWA), 133–153 (AIHSMTITITLGFYFTFLQMM), and 171–191 (FFVATGFHGLHVIIGSTFLFM).

It belongs to the cytochrome c oxidase subunit 3 family. Component of the cytochrome c oxidase (complex IV, CIV), a multisubunit enzyme composed of a catalytic core of 3 subunits and several supernumerary subunits. The complex exists as a monomer or a dimer and forms supercomplexes (SCs) in the inner mitochondrial membrane with ubiquinol-cytochrome c oxidoreductase (cytochrome b-c1 complex, complex III, CIII).

Its subcellular location is the mitochondrion inner membrane. The enzyme catalyses 4 Fe(II)-[cytochrome c] + O2 + 8 H(+)(in) = 4 Fe(III)-[cytochrome c] + 2 H2O + 4 H(+)(out). Component of the cytochrome c oxidase, the last enzyme in the mitochondrial electron transport chain which drives oxidative phosphorylation. The respiratory chain contains 3 multisubunit complexes succinate dehydrogenase (complex II, CII), ubiquinol-cytochrome c oxidoreductase (cytochrome b-c1 complex, complex III, CIII) and cytochrome c oxidase (complex IV, CIV), that cooperate to transfer electrons derived from NADH and succinate to molecular oxygen, creating an electrochemical gradient over the inner membrane that drives transmembrane transport and the ATP synthase. Cytochrome c oxidase is the component of the respiratory chain that catalyzes the reduction of oxygen to water. Electrons originating from reduced cytochrome c in the intermembrane space (IMS) are transferred via the dinuclear copper A center (CU(A)) of subunit 2 and heme A of subunit 1 to the active site in subunit 1, a binuclear center (BNC) formed by heme A3 and copper B (CU(B)). The BNC reduces molecular oxygen to 2 water molecules using 4 electrons from cytochrome c in the IMS and 4 protons from the mitochondrial matrix. The protein is Cytochrome c oxidase subunit 3 (COIII) of Enteroctopus dofleini (North Pacific giant octopus).